The sequence spans 547 residues: Phosphomethylpyrimidine synthase (547 aa).

Residues N146, M175, Y204, H240, 260–262, 301–304, and E340 each bind substrate; these read SRG and DGLR. H344 serves as a coordination point for Zn(2+). Position 367 (Y367) interacts with substrate. Zn(2+) is bound at residue H408. [4Fe-4S] cluster-binding residues include C488, C491, and C496.

This sequence belongs to the ThiC family. It depends on [4Fe-4S] cluster as a cofactor.

The catalysed reaction is 5-amino-1-(5-phospho-beta-D-ribosyl)imidazole + S-adenosyl-L-methionine = 4-amino-2-methyl-5-(phosphooxymethyl)pyrimidine + CO + 5'-deoxyadenosine + formate + L-methionine + 3 H(+). The protein operates within cofactor biosynthesis; thiamine diphosphate biosynthesis. Catalyzes the synthesis of the hydroxymethylpyrimidine phosphate (HMP-P) moiety of thiamine from aminoimidazole ribotide (AIR) in a radical S-adenosyl-L-methionine (SAM)-dependent reaction. The sequence is that of Phosphomethylpyrimidine synthase from Mycobacterium bovis (strain ATCC BAA-935 / AF2122/97).